The chain runs to 58 residues: UPF0391 membrane protein VP0082 (58 aa).

2 consecutive transmembrane segments (helical) span residues tryptophan 4–alanine 24 and valine 30–isoleucine 50.

It belongs to the UPF0391 family.

The protein localises to the cell membrane. This is UPF0391 membrane protein VP0082 from Vibrio parahaemolyticus serotype O3:K6 (strain RIMD 2210633).